Here is a 332-residue protein sequence, read N- to C-terminus: Methionine synthase (332 aa).

Zn(2+) is bound by residues His-211, Cys-213, and Cys-296.

Belongs to the archaeal MetE family. Zn(2+) is required as a cofactor.

Its pathway is amino-acid biosynthesis; L-methionine biosynthesis via de novo pathway. Functionally, catalyzes the transfer of a methyl group to L-homocysteine resulting in methionine formation. The physiological methyl donor is unknown. The sequence is that of Methionine synthase from Saccharolobus islandicus (strain L.S.2.15 / Lassen #1) (Sulfolobus islandicus).